Here is a 252-residue protein sequence, read N- to C-terminus: Aliphatic sulfonates import ATP-binding protein SsuB 1 (252 aa).

The ABC transporter domain maps to 6–234 (LQLHIAGKRF…PRDRQAHEAA (229 aa)). 38–45 (GASGCGKS) is a binding site for ATP.

This sequence belongs to the ABC transporter superfamily. Aliphatic sulfonates importer (TC 3.A.1.17.2) family. As to quaternary structure, the complex is composed of two ATP-binding proteins (SsuB), two transmembrane proteins (SsuC) and a solute-binding protein (SsuA).

It localises to the cell inner membrane. The catalysed reaction is ATP + H2O + aliphatic sulfonate-[sulfonate-binding protein]Side 1 = ADP + phosphate + aliphatic sulfonateSide 2 + [sulfonate-binding protein]Side 1.. Part of the ABC transporter complex SsuABC involved in aliphatic sulfonates import. Responsible for energy coupling to the transport system. In Xanthomonas axonopodis pv. citri (strain 306), this protein is Aliphatic sulfonates import ATP-binding protein SsuB 1.